The chain runs to 2543 residues: Zinc finger FYVE domain-containing protein 26 (2543 aa).

At Ser-297 the chain carries Phosphoserine. Disordered regions lie at residues 523–545 (ECRD…SLSS), 609–636 (GLLG…GCQE), 699–722 (LSSH…SRDG), and 744–820 (VTSN…GRLQ). 3 positions are modified to phosphoserine: Ser-615, Ser-619, and Ser-703. The span at 699–710 (LSSHSPPEKPKL) shows a compositional bias: basic and acidic residues. Basic residues predominate over residues 767–776 (SLRRGRRTRR). Residues 786 to 806 (SNPSLESTSSELSTSTSEGSL) show a composition bias toward low complexity. Ser-802 is subject to Phosphoserine. Positions 870–897 (MFMERYQEVIQELSRVEHKIENQNSDGG) form a coiled coil. The interval 1272 to 1299 (LSTLSSPKPTGNSTLERKPHSSPRDSSL) is disordered. Residues 1273–1285 (STLSSPKPTGNST) show a composition bias toward polar residues. Residues Ser-1744, Ser-1765, Ser-1784, and Ser-1786 each carry the phosphoserine modification. Residues 1780-1812 (STIHSPSPRERSFPESQPPPEFVPPATPPGRPQ) form a disordered region. Pro residues predominate over residues 1795–1810 (SQPPPEFVPPATPPGR). The FYVE-type zinc finger occupies 1816-1876 (DESASICMVC…VCDQCYSYYN (61 aa)). Zn(2+) is bound by residues Cys-1822, Cys-1825, Cys-1839, Cys-1842, Cys-1847, Cys-1850, Cys-1868, and Cys-1871.

This sequence belongs to the ZFYVE26 family. Interacts with AP5Z1, AP5B1, AP5S1 and SPG11. Interacts with TTC19 and KIF13A.

The protein resides in the cytoplasm. The protein localises to the cytoskeleton. It is found in the microtubule organizing center. Its subcellular location is the centrosome. It localises to the midbody. Its function is as follows. Phosphatidylinositol 3-phosphate-binding protein required for the abscission step in cytokinesis: recruited to the midbody during cytokinesis and acts as a regulator of abscission. May also be required for efficient homologous recombination DNA double-strand break repair. This chain is Zinc finger FYVE domain-containing protein 26 (ZFYVE26), found in Ailuropoda melanoleuca (Giant panda).